Reading from the N-terminus, the 121-residue chain is uncharacterized protein (121 aa).

One can recognise an RRM domain in the interval 10–87 (YIIIVTGVHP…EKLEVDFAFL (78 aa)). The disordered stretch occupies residues 90 to 121 (PERAPRPSISTRSRSQSPEVQHRDRDVAMAEP). Polar residues predominate over residues 97-108 (SISTRSRSQSPE). Basic and acidic residues predominate over residues 109-121 (VQHRDRDVAMAEP).

The protein localises to the cytoplasm. It localises to the nucleus. This is an uncharacterized protein from Schizosaccharomyces pombe (strain 972 / ATCC 24843) (Fission yeast).